The following is a 526-amino-acid chain: Peptide chain release factor 3 (526 aa).

Positions asparagine 8–glutamine 277 constitute a tr-type G domain. GTP is bound by residues serine 17 to threonine 24, aspartate 85 to histidine 89, and asparagine 139 to aspartate 142.

The protein belongs to the TRAFAC class translation factor GTPase superfamily. Classic translation factor GTPase family. PrfC subfamily.

It localises to the cytoplasm. Functionally, increases the formation of ribosomal termination complexes and stimulates activities of RF-1 and RF-2. It binds guanine nucleotides and has strong preference for UGA stop codons. It may interact directly with the ribosome. The stimulation of RF-1 and RF-2 is significantly reduced by GTP and GDP, but not by GMP. The polypeptide is Peptide chain release factor 3 (Actinobacillus pleuropneumoniae serotype 7 (strain AP76)).